Consider the following 204-residue polypeptide: N-(5'-phosphoribosyl)anthranilate isomerase (204 aa).

This sequence belongs to the TrpF family.

The enzyme catalyses N-(5-phospho-beta-D-ribosyl)anthranilate = 1-(2-carboxyphenylamino)-1-deoxy-D-ribulose 5-phosphate. It functions in the pathway amino-acid biosynthesis; L-tryptophan biosynthesis; L-tryptophan from chorismate: step 3/5. The protein is N-(5'-phosphoribosyl)anthranilate isomerase of Pseudomonas fluorescens (strain Pf0-1).